Reading from the N-terminus, the 90-residue chain is Putative ATPase inhibitor, mitochondrial (90 aa).

Residues 42–89 (ESREKAKEDFFVHQHEIEQLRKLKESLKLHREELDELESRVDKKMKSN) are a coiled coil.

It belongs to the ATPase inhibitor family.

It is found in the mitochondrion. Functionally, forms a one-to-one complex with ATPase to inhibit the enzyme activity completely. The sequence is that of Putative ATPase inhibitor, mitochondrial (inh1) from Schizosaccharomyces pombe (strain 972 / ATCC 24843) (Fission yeast).